A 222-amino-acid polypeptide reads, in one-letter code: Disulfide bond formation protein D (222 aa).

Residues 1-36 form the signal peptide; the sequence is MKKKQQSSAKFAVILTVVVVVLLAAIVIINNKTEQG. Residues 37-220 form the Thioredoxin domain; it reads NDAVSGQPSI…IKETIEKELK (184 aa). Cys69 and Cys72 are joined by a disulfide.

This sequence belongs to the thioredoxin family. DsbA subfamily.

It is found in the cell membrane. Its subcellular location is the membrane raft. Its function is as follows. Required for the stabilization, possibly via formation of a disulfide bond, of the obligatory competence protein ComGC. May be required for the stability of secreted proteins with disulfide bonds. Not required for sporulation. This Bacillus subtilis (strain 168) protein is Disulfide bond formation protein D (bdbD).